The sequence spans 133 residues: Small ribosomal subunit protein uS19 (133 aa).

It belongs to the universal ribosomal protein uS19 family. Part of the 30S ribosomal subunit.

Functionally, protein S19 forms a complex with S13 that binds strongly to the 16S ribosomal RNA. This is Small ribosomal subunit protein uS19 from Thermococcus kodakarensis (strain ATCC BAA-918 / JCM 12380 / KOD1) (Pyrococcus kodakaraensis (strain KOD1)).